The sequence spans 498 residues: Envelope glycoprotein G (498 aa).

A signal peptide spans 1-20 (MKWATWILALGLLVVRTVVA). Residues asparagine 56, asparagine 86, asparagine 142, and asparagine 226 are each glycosylated (N-linked (GlcNAc...) asparagine; by host). A run of 2 repeats spans residues 271-292 (EEEAELTSSDLDNIEIEVVGSP) and 308-329 (EEDEELTSSDLDNIEIEVVGSP). The segment at 271–329 (EEEAELTSSDLDNIEIEVVGSPAAPAEGPATEEGRGAEEDEELTSSDLDNIEIEVVGSP) is 2 X 22 AA repeats of E-E-[DE]-[AE]-E-L-T-S-S-D-L-D-N-I-E-I-E-V-V-G-S-P. The segment at 290–377 (GSPAAPAEGP…HRLPPEPTFV (88 aa)) is disordered. Positions 292-301 (PAAPAEGPAT) are enriched in low complexity. The span at 308–322 (EEDEELTSSDLDNIE) shows a compositional bias: acidic residues. A compositionally biased stretch (pro residues) spans 329 to 342 (PRPPASSPPPPPPR). Over residues 346–364 (RGRDHDHDHGHHRADDRGP) the composition is skewed to basic and acidic residues. Asparagine 443 carries an N-linked (GlcNAc...) asparagine; by host glycan. The chain crosses the membrane as a helical span at residues 463–483 (VALAGLVVVGIVIMCLHMAII).

This sequence belongs to the alphaherpesvirinae glycoprotein G family.

The protein localises to the virion membrane. Chemokine-binding protein that inhibits neutrophils' chemotaxis. The sequence is that of Envelope glycoprotein G (gG) from Sus scrofa (Pig).